The following is a 127-amino-acid chain: Large ribosomal subunit protein bL17 (127 aa).

Belongs to the bacterial ribosomal protein bL17 family. In terms of assembly, part of the 50S ribosomal subunit. Contacts protein L32.

This is Large ribosomal subunit protein bL17 from Haemophilus ducreyi (strain 35000HP / ATCC 700724).